The primary structure comprises 654 residues: Dystrobrevin beta (654 aa).

At methionine 1 the chain carries N-acetylmethionine. Phosphothreonine occurs at positions 11, 69, 179, and 212. The ZZ-type zinc finger occupies 238–294 (FHPVECSYCHCESMMGFRYRCQQCHNYQLCQNCFWRGHAGGPHSNQHQMKELSSWKS). Zn(2+)-binding residues include cysteine 243, cysteine 246, cysteine 258, cysteine 261, cysteine 267, cysteine 270, histidine 280, and histidine 284. Serine 394 is subject to Phosphoserine. A syntrophin-binding region region spans residues 399–448 (DEEHRLIARYAARLAAEAGNMTRPPTDASFNFDANKQQRQLIAELENKNR). At threonine 424 the chain carries Phosphothreonine. Residues 429–519 (NFDANKQQRQ…LEGLMKLLKA (91 aa)) adopt a coiled-coil conformation. Residues 520-562 (QATGSPHTSPTHGGGRSMPMPVRSTSAGSTPTHGPQDSLSGVG) form a disordered region. 2 stretches are compositionally biased toward polar residues: residues 521-530 (ATGSPHTSPT) and 542-558 (RSTSAGSTPTHGPQDSL).

The protein belongs to the dystrophin family. Dystrobrevin subfamily. In terms of assembly, interacts with dystrophin short form DP71 and syntrophins SNTG1 and SNTG2. Binds DTNBP1. Forms a specific complex composed of DMD, SNTB2 and SNTA1 in neuron; the interaction with SNTB2 and SNTA1 is DMD independent. Interacts with UTRN and dystrophin short form DP71 in the kidney and liver. Interacts with SNTB1, SNTB2 and SNTA1 in kidney and liver. Interacts with KIF5A. Interacts with HMG20A and HMG20B. Interacts with OLFM1. Interacts with PRKAR2B and PRKAR1A. Phosphorylated by PKA. Phosphorylation at Thr-11 alters the interaction with KIF5A. As to expression, expressed in neurons. In the isocortex, expressed most prominently in the somata (including the nuclei) and the dendrites of the pyramidal cells. Expressed in the hippocampus CA1, CA2, and CA3 neurons, namely in the initial segments of dendrites. Expressed in the Purkinje cells, molecular layer interneurons, and granule cells of cerebellum. Expressed in axon fascicles associated with the spinal trigeminal tract and in the internal capsule in the brainstem.

It localises to the cytoplasm. It is found in the postsynaptic density. Its subcellular location is the cell projection. The protein localises to the dendrite. The protein resides in the basal cell membrane. It localises to the postsynapse. It is found in the nucleus. Its function is as follows. Scaffolding protein that assembles DMD and SNTA1 molecules to the basal membrane of kidney cells and liver sinusoids. May function as a repressor of the SYN1 promoter through the binding of repressor element-1 (RE-1), in turn regulates SYN1 expression and may be involved in cell proliferation regulation during the early phase of neural differentiation. May be required for proper maturation and function of a subset of inhibitory synapses. The protein is Dystrobrevin beta of Rattus norvegicus (Rat).